A 341-amino-acid chain; its full sequence is Abnormal cell lineage protein 44 (341 aa).

The signal sequence occupies residues 1 to 21; it reads MRALYFRTTTLSTFFILCSLA. 11 cysteine pairs are disulfide-bonded: cysteine 84–cysteine 95, cysteine 134–cysteine 142, cysteine 144–cysteine 158, cysteine 206–cysteine 220, cysteine 208–cysteine 215, cysteine 265–cysteine 292, cysteine 275–cysteine 287, cysteine 291–cysteine 331, cysteine 307–cysteine 322, cysteine 309–cysteine 319, and cysteine 314–cysteine 315. A lipid anchor (O-palmitoleoyl serine; by mom-1) is attached at serine 212. N-linked (GlcNAc...) asparagine glycosylation is present at asparagine 279.

Belongs to the Wnt family. Post-translationally, palmitoleoylation is required for efficient binding to frizzled receptors. Depalmitoleoylation leads to Wnt signaling pathway inhibition.

It is found in the secreted. It localises to the extracellular space. The protein resides in the extracellular matrix. Functionally, ligand for members of the frizzled family of seven transmembrane receptors. Affects male tail development, vulval precursor cell specification and egg laying. Involved in morphogenesis by influencing polarity of asymmetric cell divisions of the B, U, and F cells in the male, and the T cell in males and hermaphrodites. Controls spindle orientation in B-gamma cell division during male copulatory spicule development. Involved in specification of the P7.p lineage during vulval development. Has a role in providing polarity and default lin-17 localization in axon development and positioning of neuromuscular synapses in DA9 regions by negatively regulating synaptogenesis. This is Abnormal cell lineage protein 44 from Caenorhabditis briggsae.